The sequence spans 323 residues: Probable cell division protein WhiA (323 aa).

The H-T-H motif DNA-binding region spans 279 to 313 (TLKELGEMVSGGKISKSGINHRLRKLDEIAERLRA).

Belongs to the WhiA family.

Its function is as follows. Involved in cell division and chromosome segregation. In Anoxybacillus flavithermus (strain DSM 21510 / WK1), this protein is Probable cell division protein WhiA.